Here is a 358-residue protein sequence, read N- to C-terminus: MHAVTRPTLREAVARLAPGTGLRDGLERILRGRTGALIVLGHDENVEAICDGGFSLDVRYAATRLRELCKMDGAVVLSTDGSRIVRANVQLVPDPSIPTDESGTRHRSAERAAIQTGYPVISVSHSMNIVTVYVRGERHVLTDSATILSRANQAIATLERYKTRLDEVSRQLSRAEIEDFVTLRDVMTVVQRLELVRRIGLVIDYDVVELGTDGRQLRLQLDELLGGNDTARELIVRDYHANPEPPSTGQINATLDELDALSDGDLLDFTALAKVFGYPTTTEAQDSTLSPRGYRAMAGIPRLQFAHADLLVRAFGTLQGLLAASAGDLQSVDGIGAMWARHVREGLSQLAESTISDQ.

Residues 6 to 144 (RPTLREAVAR…RGERHVLTDS (139 aa)) form the DAC domain. Residues G73, L91, and 104–108 (TRHRS) each bind ATP.

It belongs to the DisA family. Homooctamer. Requires Mg(2+) as cofactor.

It carries out the reaction 2 ATP = 3',3'-c-di-AMP + 2 diphosphate. Its function is as follows. Participates in a DNA-damage check-point. DisA forms globular foci that rapidly scan along the chromosomes searching for lesions. In terms of biological role, also has diadenylate cyclase activity, catalyzing the condensation of 2 ATP molecules into cyclic di-AMP (c-di-AMP). c-di-AMP likely acts as a signaling molecule that may couple DNA integrity with a cellular process. The polypeptide is DNA integrity scanning protein DisA (Mycobacterium tuberculosis (strain ATCC 25177 / H37Ra)).